The chain runs to 355 residues: Uroporphyrinogen decarboxylase (355 aa).

Residues 27 to 31, D77, Y154, T209, and H327 contribute to the substrate site; that span reads RQAGR.

It belongs to the uroporphyrinogen decarboxylase family. As to quaternary structure, homodimer.

The protein resides in the cytoplasm. The catalysed reaction is uroporphyrinogen III + 4 H(+) = coproporphyrinogen III + 4 CO2. The protein operates within porphyrin-containing compound metabolism; protoporphyrin-IX biosynthesis; coproporphyrinogen-III from 5-aminolevulinate: step 4/4. In terms of biological role, catalyzes the decarboxylation of four acetate groups of uroporphyrinogen-III to yield coproporphyrinogen-III. This is Uroporphyrinogen decarboxylase from Pseudoalteromonas atlantica (strain T6c / ATCC BAA-1087).